A 148-amino-acid polypeptide reads, in one-letter code: Histone H2B.1 (148 aa).

Basic and acidic residues predominate over residues 1-35 (MAPRAEKKPAEKKTAAERPVEENKAAEKAPAEKKP). Residues 1–56 (MAPRAEKKPAEKKTAAERPVEENKAAEKAPAEKKPKAGKKLPPKEAGDKKKKRSKK) form a disordered region. A N,N,N-trimethylalanine; alternate modification is found at Ala2. Ala2 carries the post-translational modification N,N-dimethylalanine; alternate. N-methylalanine; alternate is present on Ala2. An N6-acetyllysine; partial modification is found at Lys7. Lys12 carries the post-translational modification N6-acetyllysine. Residue Lys13 is modified to N6,N6-dimethyllysine. N6-acetyllysine occurs at positions 28, 33, and 39. Lys40 is subject to N6-acetyllysine; partial. Residue Lys144 forms a Glycyl lysine isopeptide (Lys-Gly) (interchain with G-Cter in ubiquitin) linkage.

Belongs to the histone H2B family. As to quaternary structure, the nucleosome is a histone octamer containing two molecules each of H2A, H2B, H3 and H4 assembled in one H3-H4 heterotetramer and two H2A-H2B heterodimers. The octamer wraps approximately 147 bp of DNA. Interacts with AHL27. Post-translationally, can be acetylated to form H2BK6ac, H2BK33ac and H2BK34ac. In terms of processing, mono-, di- or trimethylated at the N-terminus to form H2BA1me1/2/3. H2BA1me2 may be acetylated to form H2BA1me2K6ac. Monoubiquitinated by BRE1 to form H2BK143ub1 and deubiquitinated by UBP26. Required for heterochromatic histone H3 di- and trimethylation at H3K4me. May give a specific tag for epigenetic transcriptional activation.

Its subcellular location is the nucleus. It is found in the chromosome. Its function is as follows. Core component of nucleosome. Nucleosomes wrap and compact DNA into chromatin, limiting DNA accessibility to the cellular machineries which require DNA as a template. Histones thereby play a central role in transcription regulation, DNA repair, DNA replication and chromosomal stability. DNA accessibility is regulated via a complex set of post-translational modifications of histones, also called histone code, and nucleosome remodeling. This chain is Histone H2B.1, found in Arabidopsis thaliana (Mouse-ear cress).